A 104-amino-acid chain; its full sequence is Complex III assembly factor LYRM7 (104 aa).

This sequence belongs to the complex I LYR family. In terms of assembly, interacts with UQCRFS1.

Its subcellular location is the mitochondrion matrix. In terms of biological role, assembly factor required for Rieske Fe-S protein UQCRFS1 incorporation into the cytochrome b-c1 (CIII) complex. Functions as a chaperone, binding to this subunit within the mitochondrial matrix and stabilizing it prior to its translocation and insertion into the late CIII dimeric intermediate within the mitochondrial inner membrane. The chain is Complex III assembly factor LYRM7 (lyrm7) from Tetraodon nigroviridis (Spotted green pufferfish).